Reading from the N-terminus, the 222-residue chain is V-type ATP synthase subunit D (222 aa).

This sequence belongs to the V-ATPase D subunit family.

In terms of biological role, produces ATP from ADP in the presence of a proton gradient across the membrane. In Deinococcus geothermalis (strain DSM 11300 / CIP 105573 / AG-3a), this protein is V-type ATP synthase subunit D.